The sequence spans 270 residues: NAD(P)H-hydrate epimerase (270 aa).

The 210-residue stretch at 25 to 234 folds into the YjeF N-terminal domain; sequence FQQLMDLMQN…DLLAPEEIYQ (210 aa). 73–77 is a binding site for (6S)-NADPHX; sequence DNGGQ. K(+)-binding residues include Asn74 and Asp144. (6S)-NADPHX is bound by residues 148–154 and Glu177; that span reads GVGLYGH. Thr180 contacts K(+).

It belongs to the NnrE/AIBP family. Requires K(+) as cofactor.

It carries out the reaction (6R)-NADHX = (6S)-NADHX. The enzyme catalyses (6R)-NADPHX = (6S)-NADPHX. Functionally, catalyzes the epimerization of the S- and R-forms of NAD(P)HX, a damaged form of NAD(P)H that is a result of enzymatic or heat-dependent hydration. This is a prerequisite for the S-specific NAD(P)H-hydrate dehydratase to allow the repair of both epimers of NAD(P)HX. This Legionella pneumophila (strain Paris) protein is NAD(P)H-hydrate epimerase.